The primary structure comprises 320 residues: Ferrochelatase (320 aa).

His-194 and Glu-275 together coordinate Fe cation.

It belongs to the ferrochelatase family.

Its subcellular location is the cytoplasm. It catalyses the reaction heme b + 2 H(+) = protoporphyrin IX + Fe(2+). The protein operates within porphyrin-containing compound metabolism; protoheme biosynthesis; protoheme from protoporphyrin-IX: step 1/1. In terms of biological role, catalyzes the ferrous insertion into protoporphyrin IX. This Vibrio cholerae serotype O1 (strain ATCC 39315 / El Tor Inaba N16961) protein is Ferrochelatase.